The following is a 460-amino-acid chain: Endoglucanase 2 (460 aa).

The N-terminal stretch at 1 to 32 (MIKGSSLKRIKSLVMMAIFSVSIITTAIVSSA) is a signal peptide. Residue Glu99 is the Proton donor of the active site. The Nucleophile role is filled by Asp155. The region spanning 400–460 (QQGLKGDVNN…FAQLKVKLLN (61 aa)) is the Dockerin domain.

This sequence belongs to the glycosyl hydrolase 8 (cellulase D) family.

It catalyses the reaction Endohydrolysis of (1-&gt;4)-beta-D-glucosidic linkages in cellulose, lichenin and cereal beta-D-glucans.. In Ruminiclostridium josui (Clostridium josui), this protein is Endoglucanase 2 (celB).